The sequence spans 403 residues: Acetyl-CoA acetyltransferase IB (403 aa).

The active-site Acyl-thioester intermediate is Cys-91. Active-site proton acceptor residues include His-353 and Cys-383. Residues Ala-401–Leu-403 carry the Microbody targeting signal motif.

This sequence belongs to the thiolase-like superfamily. Thiolase family. As to quaternary structure, multimeric.

It is found in the peroxisome. It carries out the reaction 2 acetyl-CoA = acetoacetyl-CoA + CoA. The protein operates within metabolic intermediate biosynthesis; (R)-mevalonate biosynthesis; (R)-mevalonate from acetyl-CoA: step 1/3. This chain is Acetyl-CoA acetyltransferase IB (PACTB), found in Candida tropicalis (Yeast).